The sequence spans 189 residues: MAKIPYAILEKGSLLLASPDTDQGVFARSVILLCEHSLNGSFGLILNKTLGLEISDDIFPVDKVSNNNIRFCMGGPLQANQMMLLHSCSEIPEQTLEICPSVYLGGDLSFLQEIASSEAGPMINLCFGYSGWQAGQLEREFLDGNWFLAPASYEYVFTDSPENLWSMILKDLGGKYASLSTVPENLLLN.

It belongs to the UPF0301 (AlgH) family.

The protein is UPF0301 protein CAB604 of Chlamydia abortus (strain DSM 27085 / S26/3) (Chlamydophila abortus).